Consider the following 208-residue polypeptide: Small ribosomal subunit protein uS4 (208 aa).

In terms of domain architecture, S4 RNA-binding spans 95-157 (RRIDNIVYRA…DSLKKLVRSN (63 aa)).

The protein belongs to the universal ribosomal protein uS4 family. Part of the 30S ribosomal subunit. Contacts protein S5. The interaction surface between S4 and S5 is involved in control of translational fidelity.

One of the primary rRNA binding proteins, it binds directly to 16S rRNA where it nucleates assembly of the body of the 30S subunit. Functionally, with S5 and S12 plays an important role in translational accuracy. This chain is Small ribosomal subunit protein uS4, found in Borrelia duttonii (strain Ly).